We begin with the raw amino-acid sequence, 360 residues long: Cinnamyl alcohol dehydrogenase 2 (360 aa).

The 329-residue stretch at 23–351 (GVLSPFNFSR…KADVKYRFVI (329 aa)) folds into the Enoyl reductase (ER) domain. Cys-50 serves as a coordination point for Zn(2+). An an alcohol-binding site is contributed by Ser-52. Ser-52 provides a ligand contact to NADP(+). Zn(2+) is bound by residues Asp-53, His-72, Glu-73, Cys-103, Cys-106, Cys-109, Cys-117, and Cys-166. His-72 lines the an alcohol pocket. 12 residues coordinate NADP(+): Leu-192, Gly-194, Leu-195, Ser-214, Thr-215, Ser-216, Lys-219, Lys-220, Val-277, Ala-279, Ser-301, and Arg-348.

The protein belongs to the zinc-containing alcohol dehydrogenase family. Class-P subfamily. In terms of assembly, homodimer. Requires Zn(2+) as cofactor. Mainly expressed in young roots and, to a lower extent, in stems and leaves.

Its subcellular location is the cytoplasm. The enzyme catalyses (E)-cinnamyl alcohol + NADP(+) = (E)-cinnamaldehyde + NADPH + H(+). In terms of biological role, alcohol dehydrogenase that catalyzes the conversion of (E)-cinnamyl alcohol to (E)-cinnamaldehyde. The protein is Cinnamyl alcohol dehydrogenase 2 of Rauvolfia serpentina (Serpentine wood).